Here is a 38-residue protein sequence, read N- to C-terminus: Photosystem II reaction center protein L (38 aa).

A helical transmembrane segment spans residues 17–37 (SLFWGLLLIFVLAVLFSNYFF).

Belongs to the PsbL family. As to quaternary structure, PSII is composed of 1 copy each of membrane proteins PsbA, PsbB, PsbC, PsbD, PsbE, PsbF, PsbH, PsbI, PsbJ, PsbK, PsbL, PsbM, PsbT, PsbX, PsbY, PsbZ, Psb30/Ycf12, at least 3 peripheral proteins of the oxygen-evolving complex and a large number of cofactors. It forms dimeric complexes.

It localises to the plastid. The protein resides in the chloroplast thylakoid membrane. One of the components of the core complex of photosystem II (PSII). PSII is a light-driven water:plastoquinone oxidoreductase that uses light energy to abstract electrons from H(2)O, generating O(2) and a proton gradient subsequently used for ATP formation. It consists of a core antenna complex that captures photons, and an electron transfer chain that converts photonic excitation into a charge separation. This subunit is found at the monomer-monomer interface and is required for correct PSII assembly and/or dimerization. This chain is Photosystem II reaction center protein L, found in Chaetosphaeridium globosum (Charophycean green alga).